We begin with the raw amino-acid sequence, 894 residues long: Probable cytoplasmic aconitate hydratase (894 aa).

Substrate-binding positions include glutamine 87 and aspartate 207–histidine 209. 3 residues coordinate [4Fe-4S] cluster: cysteine 438, cysteine 504, and cysteine 507. Substrate contacts are provided by residues arginine 537, arginine 542, and serine 781 to arginine 782.

The protein belongs to the aconitase/IPM isomerase family. The cofactor is [4Fe-4S] cluster.

Its subcellular location is the cytoplasm. The protein resides in the cytosol. It catalyses the reaction citrate = D-threo-isocitrate. Its function is as follows. Catalyzes the isomerization of citrate to isocitrate via cis-aconitate. The polypeptide is Probable cytoplasmic aconitate hydratase (aco1) (Dictyostelium discoideum (Social amoeba)).